Here is a 275-residue protein sequence, read N- to C-terminus: Orotidine 5'-phosphate decarboxylase (275 aa).

Residue lysine 101 is the Proton donor of the active site.

Belongs to the OMP decarboxylase family. Type 2 subfamily.

It carries out the reaction orotidine 5'-phosphate + H(+) = UMP + CO2. It participates in pyrimidine metabolism; UMP biosynthesis via de novo pathway; UMP from orotate: step 2/2. This Leptospira interrogans serogroup Icterohaemorrhagiae serovar Lai (strain 56601) protein is Orotidine 5'-phosphate decarboxylase.